A 229-amino-acid chain; its full sequence is uncharacterized protein (229 aa).

A PilZ domain is found at 102-217 (RRRTVRVEPD…REKVRRYVFE (116 aa)).

To A.aeolicus aq_820 and aq_1211.

This is an uncharacterized protein from Aquifex aeolicus (strain VF5).